The following is a 391-amino-acid chain: Leucine aminopeptidase 1 (391 aa).

The signal sequence occupies residues 1-19 (MKLSIALALGATASTGVLA). The propeptide occupies 20–91 (AVVPQQEPLI…YPTLHAGSYV (72 aa)). A glycan (N-linked (GlcNAc...) asparagine) is linked at Asn-183. 2 residues coordinate Zn(2+): His-191 and Asp-210. Asn-235 is a glycosylation site (N-linked (GlcNAc...) asparagine). 2 residues coordinate Zn(2+): Glu-249 and Asp-276. A disulfide bridge links Cys-325 with Cys-329. His-358 serves as a coordination point for Zn(2+).

Belongs to the peptidase M28 family. M28E subfamily. Monomer. It depends on Zn(2+) as a cofactor.

The protein localises to the secreted. Extracellular aminopeptidase that allows assimilation of proteinaceous substrates. The protein is Leucine aminopeptidase 1 (lap1) of Aspergillus niger (strain ATCC MYA-4892 / CBS 513.88 / FGSC A1513).